A 68-amino-acid polypeptide reads, in one-letter code: Conotoxin reg3.14 (68 aa).

The N-terminal stretch at 1–22 is a signal peptide; sequence MMSKLGVLLTICLLLFPLSVLP. A propeptide spanning residues 23 to 52 is cleaved from the precursor; sequence LDGDQPADQPAERMQDISAEQNPWFDPVKR. 3 disulfides stabilise this stretch: Cys-53–Cys-68, Cys-54–Cys-64, and Cys-59–Cys-67.

This sequence belongs to the conotoxin M superfamily. Expressed by the venom duct.

The protein resides in the secreted. In Conus regius (Crown cone), this protein is Conotoxin reg3.14.